The sequence spans 309 residues: L-aminoadipate-semialdehyde dehydrogenase-phosphopantetheinyl transferase (309 aa).

CoA contacts are provided by residues Arg47, 86–91, and 108–111; these read RTSKGK and NISH. The Mg(2+) site is built by Asp129 and Glu181. 181–185 contributes to the CoA binding site; the sequence is ESFIK.

It belongs to the P-Pant transferase superfamily. AcpS family. As to quaternary structure, monomer. It depends on Mg(2+) as a cofactor.

The protein resides in the cytoplasm. It is found in the cytosol. The enzyme catalyses apo-[ACP] + CoA = holo-[ACP] + adenosine 3',5'-bisphosphate + H(+). It catalyses the reaction apo-[ACP] + acetyl-CoA = acetyl-[ACP] + adenosine 3',5'-bisphosphate + H(+). Its function is as follows. Catalyzes the post-translational modification of target proteins by phosphopantetheine. Can transfer the 4'-phosphopantetheine moiety from coenzyme A, regardless of whether the CoA is presented in the free thiol form or as an acetyl thioester, to a serine residue of a broad range of acceptors including the acyl carrier domain of FASN. The chain is L-aminoadipate-semialdehyde dehydrogenase-phosphopantetheinyl transferase (Aasdhppt) from Rattus norvegicus (Rat).